The chain runs to 32 residues: Photosystem II reaction center protein Z (32 aa).

The helical transmembrane segment at 12–32 (FGAAAWIGLVLLVGTLYYFVV) threads the bilayer.

Belongs to the PsbZ family. In terms of assembly, PSII is composed of 1 copy each of membrane proteins PsbA, PsbB, PsbC, PsbD, PsbE, PsbF, PsbH, PsbI, PsbJ, PsbK, PsbL, PsbM, PsbT, PsbY, PsbZ, Psb30/Ycf12, at least 3 peripheral proteins of the oxygen-evolving complex and a large number of cofactors. It forms dimeric complexes.

The protein resides in the plastid. The protein localises to the chloroplast thylakoid membrane. In terms of biological role, may control the interaction of photosystem II (PSII) cores with the light-harvesting antenna, regulates electron flow through the 2 photosystem reaction centers. PSII is a light-driven water plastoquinone oxidoreductase, using light energy to abstract electrons from H(2)O, generating a proton gradient subsequently used for ATP formation. The polypeptide is Photosystem II reaction center protein Z (Euglena granulata).